The primary structure comprises 437 residues: O-methyltransferase elcB (437 aa).

Aspartate 269 is a binding site for S-adenosyl-L-methionine. The Proton acceptor role is filled by histidine 319.

This sequence belongs to the class I-like SAM-binding methyltransferase superfamily. Cation-independent O-methyltransferase family. COMT subfamily.

It functions in the pathway secondary metabolite biosynthesis. In terms of biological role, O-methyltransferase; part of the gene cluster that mediates the biosynthesis of elsinochrome C, a perelyenequinone phytotoxin structurally similar to cercosporin. The first step of elsinochrome C biosynthesis is performed by the polyketide synthase elcA which catalyzes the formation of nor-toralactone. The starter unit acyltransferase (SAT) domain of elcA initiates polyketide extension by the selective utilization of acetyl-CoA, which is elongated to the heptaketide in the beta-ketoacyl synthase (KS) domain by successive condensations with six malonyl units introduced by the malonyl acyltransferase (MAT) domain. The product template (PT) domain catalyzes C4-C9 and C2-C11 aldol cyclizations and dehydrations to a trihydroxynaphthalene, which is thought to be delivered to the thioesterase (TE) domain for product release. The bifunctional enzyme elcB then methylates nor-toralactone to toralactone before conducting an unusual oxidative aromatic ring opening. The next step in perylenequinone biosynthesis is an O-methylation at the nascent OH-6 of the elcB product performed by the O-methyltransferase elcD. The oxidative coupling of the two monomeric naphthol units in perylenequinone biosynthesis is catalyzed by the FAD-dependent monooxygenase elcE and the multicopper oxidase elcG. ElcG might catalyze the first intermolecular coupling in a regio- and stereo-selective manner via a phenol radical coupling mechanism and the elcE could forge the second C-C bond intramolecularly via a hydride transfer mechanism. The fasciclin domain-containing protein elcF might also play a role duting this step. The last piece of the puzzle in the biosynthesis of elsinochrome C is the additional annulation by enolate coupling to afford the dihydrobenzo(ghi)perylenequinone system, catalyzed by the FAD-dependent monooxygenase elcH. The chain is O-methyltransferase elcB from Phaeosphaeria nodorum (strain SN15 / ATCC MYA-4574 / FGSC 10173) (Glume blotch fungus).